Here is a 473-residue protein sequence, read N- to C-terminus: Pup--protein ligase (473 aa).

A Mg(2+)-binding site is contributed by E9. Residue R54 coordinates ATP. A Mg(2+)-binding site is contributed by Y56. The active-site Proton acceptor is D58. Mg(2+) is bound at residue E64. T67 and W425 together coordinate ATP.

Belongs to the Pup ligase/Pup deamidase family. Pup-conjugating enzyme subfamily.

The enzyme catalyses ATP + [prokaryotic ubiquitin-like protein]-L-glutamate + [protein]-L-lysine = ADP + phosphate + N(6)-([prokaryotic ubiquitin-like protein]-gamma-L-glutamyl)-[protein]-L-lysine.. It functions in the pathway protein degradation; proteasomal Pup-dependent pathway. The protein operates within protein modification; protein pupylation. Catalyzes the covalent attachment of the prokaryotic ubiquitin-like protein modifier Pup to the proteasomal substrate proteins, thereby targeting them for proteasomal degradation. This tagging system is termed pupylation. The ligation reaction involves the side-chain carboxylate of the C-terminal glutamate of Pup and the side-chain amino group of a substrate lysine. The polypeptide is Pup--protein ligase (Brachybacterium faecium (strain ATCC 43885 / DSM 4810 / JCM 11609 / LMG 19847 / NBRC 14762 / NCIMB 9860 / 6-10)).